The sequence spans 171 residues: T-cell surface glycoprotein CD3 delta chain (171 aa).

The first 21 residues, 1-21 (MEHSRFLSGLILAAFLSRVSP), serve as a signal peptide directing secretion. Residues 22-104 (YEVEMEELED…NCVELDSATL (83 aa)) lie on the Extracellular side of the membrane. Cys-37 and Cys-72 form a disulfide bridge. Residue Asn-38 is glycosylated (N-linked (GlcNAc...) asparagine). Residues 105 to 125 (AGIIVTDIIATLLLALGVYCF) form a helical membrane-spanning segment. At 126–171 (AGHEMGRFSRAADTQDLLRNDQLYQPLRDRNDGQYSRLGENWARNK) the chain is on the cytoplasmic side. The region spanning 138–166 (DTQDLLRNDQLYQPLRDRNDGQYSRLGEN) is the ITAM domain. A phosphotyrosine mark is found at Tyr-149 and Tyr-160.

The TCR-CD3 complex is composed of a CD3D/CD3E and a CD3G/CD3E heterodimers that preferentially associate with TCRalpha and TCRbeta, respectively, to form TCRalpha/CD3E/CD3G and TCRbeta/CD3G/CD3E trimers. In turn, the hexamer interacts with CD3Z homodimer to form the TCR-CD3 complex. Alternatively, TCRalpha and TCRbeta can be replaced by TCRgamma and TCRdelta. Interacts with coreceptors CD4 and CD8. Phosphorylated on Tyr residues after T-cell receptor triggering by LCK in association with CD4/CD8. As to expression, CD3D is mostly present on T-lymphocytes with its TCR-CD3 partners. Present also in fetal NK-cells.

It localises to the cell membrane. Functionally, part of the TCR-CD3 complex present on T-lymphocyte cell surface that plays an essential role in adaptive immune response. When antigen presenting cells (APCs) activate T-cell receptor (TCR), TCR-mediated signals are transmitted across the cell membrane by the CD3 chains CD3D, CD3E, CD3G and CD3Z. All CD3 chains contain immunoreceptor tyrosine-based activation motifs (ITAMs) in their cytoplasmic domain. Upon TCR engagement, these motifs become phosphorylated by Src family protein tyrosine kinases LCK and FYN, resulting in the activation of downstream signaling pathways. In addition of this role of signal transduction in T-cell activation, CD3D plays an essential role in thymocyte differentiation. Indeed, participates in correct intracellular TCR-CD3 complex assembly and surface expression. In absence of a functional TCR-CD3 complex, thymocytes are unable to differentiate properly. Interacts with CD4 and CD8 and thus serves to establish a functional link between the TCR and coreceptors CD4 and CD8, which is needed for activation and positive selection of CD4 or CD8 T-cells. In Sus scrofa (Pig), this protein is T-cell surface glycoprotein CD3 delta chain (CD3D).